Consider the following 486-residue polypeptide: Protein hold'em (486 aa).

A DNA-binding region (OB) is located at residues 166-285; that stretch reads IITTNVNLLV…DCRLLLAFAA (120 aa).

The protein belongs to the MEIOB family. In terms of assembly, interacts with mei-9 and Ercc1.

Its function is as follows. Single-stranded DNA-binding protein required for meiosis. May be involved in the resolution of recombination intermediates into crossovers in the meiotic recombination pathway. The protein is Protein hold'em (hdm) of Drosophila melanogaster (Fruit fly).